The primary structure comprises 303 residues: MSFTTQVKEEILNLDSADKNELSAIIKMSGSLGLADKKLSLSIITENAKIARHIYALLERLYRINPEIKYHHKTNLRKNRVYTVFLDDNVEQILADLQLSDSFFGIETGIEQQILSDDNAGRSYLKGAFLSTGSIRDPESGKYQLEIFSVYLDHAEDLAKLMQKFMLDTKVIEHKHGAVTYLQKAEDIMDFLIIIGSMEGMEAFENIKVMRETRNDVNRTSNAETANIAKTINASIKTINNINKIKETVGLESLPIELQRIAQIRAAHPDFSIQQIADSLAVPLTKSGVNHRLRKINKIAEDL.

Residues 272-303 (SIQQIADSLAVPLTKSGVNHRLRKINKIAEDL) constitute a DNA-binding region (H-T-H motif).

Belongs to the WhiA family.

In terms of biological role, involved in cell division and chromosome segregation. The protein is Probable cell division protein WhiA of Streptococcus mutans serotype c (strain ATCC 700610 / UA159).